The chain runs to 255 residues: Leucyl/phenylalanyl-tRNA--protein transferase (255 aa).

This sequence belongs to the L/F-transferase family.

The protein localises to the cytoplasm. It carries out the reaction N-terminal L-lysyl-[protein] + L-leucyl-tRNA(Leu) = N-terminal L-leucyl-L-lysyl-[protein] + tRNA(Leu) + H(+). It catalyses the reaction N-terminal L-arginyl-[protein] + L-leucyl-tRNA(Leu) = N-terminal L-leucyl-L-arginyl-[protein] + tRNA(Leu) + H(+). The enzyme catalyses L-phenylalanyl-tRNA(Phe) + an N-terminal L-alpha-aminoacyl-[protein] = an N-terminal L-phenylalanyl-L-alpha-aminoacyl-[protein] + tRNA(Phe). Its function is as follows. Functions in the N-end rule pathway of protein degradation where it conjugates Leu, Phe and, less efficiently, Met from aminoacyl-tRNAs to the N-termini of proteins containing an N-terminal arginine or lysine. The sequence is that of Leucyl/phenylalanyl-tRNA--protein transferase from Polaromonas sp. (strain JS666 / ATCC BAA-500).